The primary structure comprises 318 residues: Acetyl-coenzyme A carboxylase carboxyl transferase subunit alpha (318 aa).

The CoA carboxyltransferase C-terminal domain maps to 38 to 292 (KLEKRLAKLE…NKTITKSLHA (255 aa)).

This sequence belongs to the AccA family. Acetyl-CoA carboxylase is a heterohexamer composed of biotin carboxyl carrier protein (AccB), biotin carboxylase (AccC) and two subunits each of ACCase subunit alpha (AccA) and ACCase subunit beta (AccD).

Its subcellular location is the cytoplasm. The enzyme catalyses N(6)-carboxybiotinyl-L-lysyl-[protein] + acetyl-CoA = N(6)-biotinyl-L-lysyl-[protein] + malonyl-CoA. Its pathway is lipid metabolism; malonyl-CoA biosynthesis; malonyl-CoA from acetyl-CoA: step 1/1. In terms of biological role, component of the acetyl coenzyme A carboxylase (ACC) complex. First, biotin carboxylase catalyzes the carboxylation of biotin on its carrier protein (BCCP) and then the CO(2) group is transferred by the carboxyltransferase to acetyl-CoA to form malonyl-CoA. In Listeria monocytogenes serovar 1/2a (strain ATCC BAA-679 / EGD-e), this protein is Acetyl-coenzyme A carboxylase carboxyl transferase subunit alpha.